The primary structure comprises 58 residues: Metallothionein-1 (58 aa).

Residues 1–28 (PGPCCNDKCVCKEGGCKEGCQCTSCRCS) form a beta region. Residues C4, C5, C9, C11, C16, C20, C22, C25, C27, C30, C33, C37, C39, C45, C49, C53, C55, and C56 each contribute to the a divalent metal cation site. The segment at 29–58 (PCEKCSSGCKCANKEECSKTCSKACSCCPT) is alpha.

This sequence belongs to the metallothionein superfamily. Type 3 family.

Metallothioneins have a high content of cysteine residues that bind various heavy metals. Class I MTS in marine crustacea are involved in the sequestration of elevated levels of heavy-metal ions. This is Metallothionein-1 from Scylla serrata (Mud crab).